Consider the following 182-residue polypeptide: CDP-diacylglycerol--glycerol-3-phosphate 3-phosphatidyltransferase (182 aa).

The Cytoplasmic portion of the chain corresponds to 2 to 12 (QFNIPTLLTLF). The helical transmembrane segment at 13 to 37 (RVILIPFLVVVFYLPFAWAPMVSAL) threads the bilayer. At 38-60 (IFCIAAITDWFDGFLARRWNQST) the chain is on the periplasmic side. Residues 61 to 81 (RFGAFLDPVADKVLVAIAMVL) traverse the membrane as a helical segment. The Cytoplasmic segment spans residues 82 to 86 (VTEHY). A helical membrane pass occupies residues 87–107 (HSWWVTLPAATMIAREIIISA). The Periplasmic portion of the chain corresponds to 108 to 145 (LREWMAELGKRSSVAVSWIGKVKTTAQMVALAWLLWRP). The chain crosses the membrane as a helical span at residues 146 to 168 (NIWVEYAGIALFFVAAVLTLWSM). Topologically, residues 169–181 (LQYLSAARGDLLD) are cytoplasmic.

It belongs to the CDP-alcohol phosphatidyltransferase class-I family.

Its subcellular location is the cell inner membrane. It catalyses the reaction a CDP-1,2-diacyl-sn-glycerol + sn-glycerol 3-phosphate = a 1,2-diacyl-sn-glycero-3-phospho-(1'-sn-glycero-3'-phosphate) + CMP + H(+). The protein operates within phospholipid metabolism; phosphatidylglycerol biosynthesis; phosphatidylglycerol from CDP-diacylglycerol: step 1/2. In terms of biological role, catalyzes the conversion of cytidine diphosphate diacylglycerol (CDP-DG) and glycerol 3-phosphate into phosphatidylglycerol. Essential for the synthesis of anionic phospholipids, thereby playing a role in balancing the ratio of zwitterionic and anionic phospholipids, which is thought to be important for normal membrane function. This Salmonella choleraesuis (strain SC-B67) protein is CDP-diacylglycerol--glycerol-3-phosphate 3-phosphatidyltransferase.